We begin with the raw amino-acid sequence, 530 residues long: Amidase FVEG_08295 (530 aa).

Residues K138 and S214 each act as charge relay system in the active site. Substrate contacts are provided by residues S214 and 235-238; that span reads IAGS. Residue S238 is the Acyl-ester intermediate of the active site.

The protein belongs to the amidase family.

It carries out the reaction a monocarboxylic acid amide + H2O = a monocarboxylate + NH4(+). Its pathway is xenobiotic degradation. Its function is as follows. Amidase; part of the Fusarium detoxification of benzoxazolinone cluster 1 (FDB1) involved in the degradation of benzoxazolinones produced by the host plant. Maize, wheat, and rye produce the 2 benzoxazinone phytoanticipins 2,4-dihy-droxy-7-methoxy-1,4-benzoxazin-3-one (DIMBOA) and 2,4-dihydroxy-1,4-benzoxazin-3-one (DIBOA) that, due to their inherent instability once released, spontaneously degrade to the more stable corresponding benzoxazolinones, 6-methoxy-2-benzoxazolinone (MBOA) and 2-benzoxazolinone (BOA), respectively. The first step in the detoxification of benzoxazolinones involves the hydrolysis of the cyclic ester bond of benzoxazolinones by the FDB1 cluster gamma-lactamase MBL1 to aminophenols. MBL1 is able to convert BOA into 2-aminophenol (2-AP), as well as MBOA into 5-methoxy-2-aminophenol (2-AMP). The FDB2 cluster N-malonyltransferase FDB2/NAT1 then metabolizes aminophenols via N-malonylation to non-toxic malonamic acids. FDB2/NAT1 converts 2-AP into N-(2-hydroxyphenyl) malonamic acid (HPMA) and 2-AMP into N-(2-hydroxy-4-methoxyphenyl) malonamic acid (HMPMA). The duplicated dienlactone hydrolases DLH1 and DLH2 may provide redundant function for hydrolyzing the lactone moiety in the BOA molecule. The roles of the amidases an other enzymes encoded by the 2 FDB clusters have not been identified so far. The chain is Amidase FVEG_08295 from Gibberella moniliformis (strain M3125 / FGSC 7600) (Maize ear and stalk rot fungus).